The chain runs to 463 residues: Chromosomal replication initiator protein DnaA (463 aa).

Positions 1–83 (MSLSLWQQCL…LRFEVGSKPI (83 aa)) are domain I, interacts with DnaA modulators. A domain II region spans residues 83-126 (IVPVAVSSAASSGASVPPAAVRASSLARPSWERVTAQPELSYRS). The segment at 127–343 (NVNPKHTFDN…GALNRVIANA (217 aa)) is domain III, AAA+ region. ATP contacts are provided by Gly-171, Gly-173, Lys-174, and Thr-175. The tract at residues 344–463 (NFTGRAITID…FSNLIRTLSS (120 aa)) is domain IV, binds dsDNA.

Belongs to the DnaA family. In terms of assembly, oligomerizes as a right-handed, spiral filament on DNA at oriC.

It localises to the cytoplasm. Plays an essential role in the initiation and regulation of chromosomal replication. ATP-DnaA binds to the origin of replication (oriC) to initiate formation of the DNA replication initiation complex once per cell cycle. Binds the DnaA box (a 9 base pair repeat at the origin) and separates the double-stranded (ds)DNA. Forms a right-handed helical filament on oriC DNA; dsDNA binds to the exterior of the filament while single-stranded (ss)DNA is stabiized in the filament's interior. The ATP-DnaA-oriC complex binds and stabilizes one strand of the AT-rich DNA unwinding element (DUE), permitting loading of DNA polymerase. After initiation quickly degrades to an ADP-DnaA complex that is not apt for DNA replication. Binds acidic phospholipids. In Edwardsiella ictaluri (strain 93-146), this protein is Chromosomal replication initiator protein DnaA.